Reading from the N-terminus, the 282-residue chain is Ribosomal protein L11 methyltransferase (282 aa).

Residues threonine 133, glycine 154, aspartate 175, and asparagine 216 each coordinate S-adenosyl-L-methionine.

Belongs to the methyltransferase superfamily. PrmA family.

It is found in the cytoplasm. It carries out the reaction L-lysyl-[protein] + 3 S-adenosyl-L-methionine = N(6),N(6),N(6)-trimethyl-L-lysyl-[protein] + 3 S-adenosyl-L-homocysteine + 3 H(+). Functionally, methylates ribosomal protein L11. In Campylobacter jejuni subsp. doylei (strain ATCC BAA-1458 / RM4099 / 269.97), this protein is Ribosomal protein L11 methyltransferase.